The following is a 234-amino-acid chain: Endonuclease NucS (234 aa).

This sequence belongs to the NucS endonuclease family.

It localises to the cytoplasm. In terms of biological role, cleaves both 3' and 5' ssDNA extremities of branched DNA structures. The polypeptide is Endonuclease NucS (Bifidobacterium animalis subsp. lactis (strain AD011)).